A 342-amino-acid polypeptide reads, in one-letter code: Ribosomal RNA small subunit methyltransferase H (342 aa).

S-adenosyl-L-methionine-binding positions include 36–38 (GGH), aspartate 56, phenylalanine 82, aspartate 100, and glutamine 107. Residues 309 to 342 (ENRESGMGKGHGAAASRFPTPDSRFPTSPNGDAP) form a disordered region. The span at 333-342 (FPTSPNGDAP) shows a compositional bias: polar residues.

The protein belongs to the methyltransferase superfamily. RsmH family.

It localises to the cytoplasm. The catalysed reaction is cytidine(1402) in 16S rRNA + S-adenosyl-L-methionine = N(4)-methylcytidine(1402) in 16S rRNA + S-adenosyl-L-homocysteine + H(+). Functionally, specifically methylates the N4 position of cytidine in position 1402 (C1402) of 16S rRNA. This chain is Ribosomal RNA small subunit methyltransferase H, found in Xanthomonas campestris pv. campestris (strain B100).